Here is a 363-residue protein sequence, read N- to C-terminus: MMHIIDRLTRPVLFAFDPERAHELSIAALKTGIPFCSGGVQNSKLAVSVAGLNFPNPIGMAAGYDKNAEIPDALLNLGFGFAECGTVTPKPQEGNPRPRIFRLTRDRAVINRLGFNNEGHAQALARLSLRKGKSGIVGVNIGANRDSSDRMADYEEGVRTFAAVASYLTINISSPNTTGLRGLQDRENLSELLQRVMRVRNEQAALIKRKVPVFLKIAPDLSEEALADIAQEVLEKGLDGLIVSNTTLSREGVSAPAASETGGLSGEPLFERSTIVLAKMRRLVGPALPIIGVGGVHSAETALEKMRAGADLVQLYTGMVFAGPGLPARIVSRLAAYAEANGLNSIAEIRDSNIKPWADRPLA.

Residues 62–66 (AGYDK) and threonine 86 contribute to the FMN site. Residue lysine 66 coordinates substrate. Residue 111 to 115 (NRLGF) participates in substrate binding. FMN-binding residues include asparagine 140 and asparagine 171. Residue asparagine 171 participates in substrate binding. The active-site Nucleophile is serine 174. A substrate-binding site is contributed by asparagine 176. Residues lysine 216 and serine 244 each coordinate FMN. 245–246 (NT) provides a ligand contact to substrate. FMN-binding positions include glycine 266, glycine 295, and 316 to 317 (YT).

It belongs to the dihydroorotate dehydrogenase family. Type 2 subfamily. Monomer. Requires FMN as cofactor.

The protein localises to the cell membrane. The catalysed reaction is (S)-dihydroorotate + a quinone = orotate + a quinol. It functions in the pathway pyrimidine metabolism; UMP biosynthesis via de novo pathway; orotate from (S)-dihydroorotate (quinone route): step 1/1. Catalyzes the conversion of dihydroorotate to orotate with quinone as electron acceptor. This chain is Dihydroorotate dehydrogenase (quinone), found in Chelativorans sp. (strain BNC1).